A 116-amino-acid chain; its full sequence is Large ribosomal subunit protein uL18 (116 aa).

It belongs to the universal ribosomal protein uL18 family. In terms of assembly, part of the 50S ribosomal subunit; part of the 5S rRNA/L5/L18/L25 subcomplex. Contacts the 5S and 23S rRNAs.

In terms of biological role, this is one of the proteins that bind and probably mediate the attachment of the 5S RNA into the large ribosomal subunit, where it forms part of the central protuberance. The chain is Large ribosomal subunit protein uL18 from Acinetobacter baylyi (strain ATCC 33305 / BD413 / ADP1).